We begin with the raw amino-acid sequence, 163 residues long: Epithelial membrane protein 3 (163 aa).

Residues 4 to 24 form a helical membrane-spanning segment; sequence LLLVVSALHILILVLLFVATL. N-linked (GlcNAc...) asparagine glycans are attached at residues N46 and N56. The next 3 membrane-spanning stretches (helical) occupy residues 66–86, 100–120, and 139–159; these read VQAL…LFMI, TGLC…IYAI, and FALA…YIHL.

The protein belongs to the PMP-22/EMP/MP20 family.

The protein resides in the membrane. Functionally, probably involved in cell proliferation and cell-cell interactions. In Rattus norvegicus (Rat), this protein is Epithelial membrane protein 3 (Emp3).